Here is a 321-residue protein sequence, read N- to C-terminus: Anthranilate phosphoribosyltransferase (321 aa).

Residues Gly72, 75–76 (GD), Thr80, 82–85 (NVST), 99–107 (KHGNVSVTS), and Ser111 each bind 5-phospho-alpha-D-ribose 1-diphosphate. Residue Gly72 coordinates anthranilate. Position 84 (Ser84) interacts with Mg(2+). Asn102 provides a ligand contact to anthranilate. Arg157 contributes to the anthranilate binding site. Asp216 and Glu217 together coordinate Mg(2+).

This sequence belongs to the anthranilate phosphoribosyltransferase family. As to quaternary structure, homodimer. Mg(2+) is required as a cofactor.

The enzyme catalyses N-(5-phospho-beta-D-ribosyl)anthranilate + diphosphate = 5-phospho-alpha-D-ribose 1-diphosphate + anthranilate. Its pathway is amino-acid biosynthesis; L-tryptophan biosynthesis; L-tryptophan from chorismate: step 2/5. Catalyzes the transfer of the phosphoribosyl group of 5-phosphorylribose-1-pyrophosphate (PRPP) to anthranilate to yield N-(5'-phosphoribosyl)-anthranilate (PRA). This chain is Anthranilate phosphoribosyltransferase, found in Methanococcus vannielii (strain ATCC 35089 / DSM 1224 / JCM 13029 / OCM 148 / SB).